Reading from the N-terminus, the 201-residue chain is MAELAPDTVPLAGVVLAGGESRRMGRDKATLPLPGGTTTLVEHMVGILGQRCAPVFVMAAPGQPLPTLPVPVLRDELPGLGPLPATGRGLRAAAEAGVRLAFVCAVDMPYLTVELIEDLARRAVQTDAEVVLPWDGRNHYLAAVYRTDLADRVDTLVGAGERKMSALVDASDALRIVMADSRPLTNVNSAAGLHAPMQPGR.

Residues 16–18, lysine 28, aspartate 75, and aspartate 107 each bind GTP; that span reads LAG. Aspartate 107 contacts Mg(2+).

It belongs to the MobA family. Mg(2+) serves as cofactor.

Its subcellular location is the cytoplasm. It catalyses the reaction Mo-molybdopterin + GTP + H(+) = Mo-molybdopterin guanine dinucleotide + diphosphate. Its function is as follows. Transfers a GMP moiety from GTP to Mo-molybdopterin (Mo-MPT) cofactor (Moco or molybdenum cofactor) to form Mo-molybdopterin guanine dinucleotide (Mo-MGD) cofactor. The chain is Probable molybdenum cofactor guanylyltransferase from Mycobacterium bovis (strain ATCC BAA-935 / AF2122/97).